The primary structure comprises 77 residues: Acyl carrier protein (77 aa).

One can recognise a Carrier domain in the interval 2 to 77 (ADVLERVTKI…DAVTYIESHL (76 aa)). Residue S37 is modified to O-(pantetheine 4'-phosphoryl)serine.

It belongs to the acyl carrier protein (ACP) family. 4'-phosphopantetheine is transferred from CoA to a specific serine of apo-ACP by AcpS. This modification is essential for activity because fatty acids are bound in thioester linkage to the sulfhydryl of the prosthetic group.

The protein localises to the cytoplasm. It functions in the pathway lipid metabolism; fatty acid biosynthesis. Its function is as follows. Carrier of the growing fatty acid chain in fatty acid biosynthesis. The chain is Acyl carrier protein from Bacillus mycoides (strain KBAB4) (Bacillus weihenstephanensis).